A 599-amino-acid polypeptide reads, in one-letter code: Nucleoporin p58/p45 (599 aa).

5 repeat units span residues 7–8, 30–31, 44–45, 63–64, and 68–69. Positions 7 to 579 are 14 X 2 AA repeats of F-G; sequence FGSGTLGSTT…VSNPASAGFG (573 aa). Residues 213 to 247 are disordered; sequence NEGLGGIDFSSSSDKKSDKTGTRPEDSKALKDENL. A compositionally biased stretch (basic and acidic residues) spans 225–246; that stretch reads SDKKSDKTGTRPEDSKALKDEN. 2 coiled-coil regions span residues 256–276 and 314–381; these read ENLQKFVKEQKQVQEEISRMS and ETAQ…SHIT. Phosphothreonine is present on threonine 331. 9 consecutive repeat copies span residues 488–489, 492–493, 513–514, 519–520, 529–530, 531–532, 545–546, 568–569, and 578–579. Residues 579–599 are disordered; the sequence is GTGGQLLQLKKPPAGNKRGKR.

Belongs to the NUP58 family. In terms of assembly, component of the p62 complex, a complex at least composed of NUP62, NUP54, and NUP58. Interacts with NUTF2. Interacts with SRP1-alpha and Importin p97 proteins when they are together, but not with SRP1-alpha protein alone. O-glycosylated.

It localises to the nucleus. It is found in the nuclear pore complex. The protein localises to the nucleus membrane. Its function is as follows. Component of the nuclear pore complex, a complex required for the trafficking across the nuclear membrane. This Homo sapiens (Human) protein is Nucleoporin p58/p45.